Reading from the N-terminus, the 478-residue chain is MQVTETTSEGLKREFQVLLPANELEDRLNTELSNIKGKVQIKGFRPGKVPVAHLRKVYGKSVMADVLQNAVNEANQQIVTDKGLRLALEPQIEFPKDEEQTIIERALDAKGDLAFKVKLEVLPSFELADLSDVSIKKLVLKPSDEEVNETLERMAKDSRSFEPREEGAEAQSGDRVTIDFVGRIDGTEFEGGKGEDVDLELGSNTFIPGFEDQLVGAKVGDSRLVKVAFPADYQAEQLAGKDAEFDVTVKAVAAPGETKIDDELAKRFGMDDLEKLKEAVSKAVGSDYEAQSRRKLKKELLDALDGKYAFDLPPSLVHQEFAAVWAQVEQDLKTRGKTFEDEGTTEEASQAEYRKIAERRVRLGLVLAQVGETADIKVSDDEVNQALFARIRQFPGQEKQVYDFYRNNPQALAELRAPLFEEKVVDHVLGQVQVVEEPVSKEALFAEDDEADAVTGGAATDEKPSESNNEAAADKAAG.

Residues Met-154–Gly-167 show a composition bias toward basic and acidic residues. 2 disordered regions span residues Met-154–Gly-173 and Lys-441–Gly-478. A PPIase FKBP-type domain is found at Gly-173 to Thr-258.

This sequence belongs to the FKBP-type PPIase family. Tig subfamily.

The protein resides in the cytoplasm. The catalysed reaction is [protein]-peptidylproline (omega=180) = [protein]-peptidylproline (omega=0). Involved in protein export. Acts as a chaperone by maintaining the newly synthesized protein in an open conformation. Functions as a peptidyl-prolyl cis-trans isomerase. The polypeptide is Trigger factor (Methylorubrum extorquens (strain CM4 / NCIMB 13688) (Methylobacterium extorquens)).